The sequence spans 276 residues: Halorhodopsin (276 aa).

The propeptide occupies 1–21; it reads MTAVSTTATTVLQATQSDVLQ. Over 22–25 the chain is Extracellular; sequence EIQS. A helical membrane pass occupies residues 26 to 51; the sequence is NFLLNSSIWVNIALAGVVILLFVAMG. Over 52–57 the chain is Cytoplasmic; it reads RDLESP. The chain crosses the membrane as a helical span at residues 58–81; that stretch reads RAKLIWVATMLVPLVSISSYAGLA. Residues 82 to 105 lie on the Extracellular side of the membrane; the sequence is SGLTVGFLQMPPGHALAGQEVLSP. Residues 106–127 form a helical membrane-spanning segment; the sequence is WGRYLTWTFSTPMILLALGLLA. Residues 128–130 are Cytoplasmic-facing; it reads DTD. A helical membrane pass occupies residues 131-154; it reads IASLFTAITMDIGMCVTGLAAALI. The Extracellular portion of the chain corresponds to 155-157; it reads TSS. Residues 158 to 180 traverse the membrane as a helical segment; sequence HLLRWVFYGISCAFFVAVLYVLL. The Cytoplasmic portion of the chain corresponds to 181–192; that stretch reads VQWPADAEAAGT. A helical transmembrane segment spans residues 193–216; sequence SEIFGTLKILTVVLWLGYPILWAL. Residues 217–225 lie on the Extracellular side of the membrane; sequence GSEGVALLS. Residues 226 to 254 traverse the membrane as a helical segment; the sequence is VGVTSWGYSGLDILAKYVFAFLLLRWVAA. Lys-241 is modified (N6-(retinylidene)lysine). Over 255 to 276 the chain is Cytoplasmic; sequence NEGTVSGSGMGIGSGGAAPADD.

This sequence belongs to the archaeal/bacterial/fungal opsin family.

Its subcellular location is the cell membrane. Light-driven anion pump. This chain is Halorhodopsin, found in Halobacterium halobium (strain shark).